Consider the following 293-residue polypeptide: Nucleotide-binding protein CKR_3143 (293 aa).

Position 8-15 (8-15) interacts with ATP; that stretch reads GLSGAGKT. GTP is bound at residue 59 to 62; that stretch reads DIRG.

The protein belongs to the RapZ-like family.

Its function is as follows. Displays ATPase and GTPase activities. This chain is Nucleotide-binding protein CKR_3143, found in Clostridium kluyveri (strain NBRC 12016).